Consider the following 1254-residue polypeptide: MNYIPTQTFYGRRWRPRPAFRPWQVSMQPTPTMVTPMLQAPDLQAQQMQQLISAVSALTTKQNVKAPKGQRQKKQQKPKEKKENQKKKPTQKKKQQQKPKPQAKKKKPGRRERMCMKIENDCIFEVKLDGKVTGYACLVGDKVMKPAHVKGTIDNPDLAKLTYKKSSKYDLECAQIPVHMKSDASKYTHEKPEGHYNWHHGAVQYSGGRFTIPTGAGKPGDSGRPIFDNKGRVVAIVLGGANEGARTALSVVTWTKDMVTRVTPEGTEEWSAALMMCILANTSFPCSSPPCYPCCYEKQPEQTLRMLEDNVNRPGYYELLEASMTCRNRSRHRRSVTEHFNVYKATRPYLAYCADCGDGYFCYSPVAIEKIRDEAPDGMLKIQVSAQIGLDKAGTHAHTKIRYMAGHDVQESKRDSLRVYTSAACSIHGTMGHFIVAHCPPGDYLKVSFEDADSHVKACKVQYKHDPLPVGREKFVVRPHFGVELPCTSYQLTTAPTDEEIDMHTPPDIPDRTLLSQTAGNVKITAGGRTIRYNCTCGRDNVGTTSTDKTINTCKIDQCHAAVTSHDKWQFTSPFVPRADQTARRGKVHVPFPLTNVTCRVPLARAPDVTYGKKEVTLRLHPDHPTLFSYRSLGAEPHPYEEWVDKFSERIIPVTEEGIEYQWGNNPPVRLWAQLTTEGKPHGWPHEIIQYYYGLYPAATIAAVSGASLMALLTLAATCCMLATARRKCLTPYALTPGAVVPLTLGLLCCAPRANAASFAETMAYLWDENKTLFWMEFAAPAAALALLACCIKSLICCCKPFSFLVLLSLGASAKAYEHTATIPNVVGFPYKAHIERNGFSPMTLQLEVVETSWEPTLNLEYITCEYKTVVPSPFIKCCGTSECSSKEQPDYQCKVYTGVYPFMWGGAYCFCDSENTQLSEAYVDRSDVCKHDHASAYKAHTASLKATIRISYGTINQTTEAFVNGEHAVNVGGSKFIFGPISTAWSPFDNKIVVYKDDVYNQDFPPYGSGQPGRFGDIQSRTVESKDLYANTALKLSRPSPGVVHVPYTPTPSGFKYWLKEKGSSLNTKAPFGCKIKTNPVRAMDCAVGSIPVSMDIPDSAFTRVVDAPAVTDLSCQVVVCTHSSDFGGVATLSYKTDKPGKCAVHSHSNVATLQEATVDVKEDGKVTVHFSTASASPAFKVSVCDAKTTCTAACEPPKDHIVPYGASHNNQVFPDMSGTAMTWVQRLASGLGGLALIAVVVLVLVTCITMRR.

Positions 43–77 (LQAQQMQQLISAVSALTTKQNVKAPKGQRQKKQQK) are host transcription inhibition. The segment at 60–113 (TKQNVKAPKGQRQKKQQKPKEKKENQKKKPTQKKKQQQKPKPQAKKKKPGRRER) is disordered. The short motif at 70 to 108 (QRQKKQQKPKEKKENQKKKPTQKKKQQQKPKPQAKKKKP) is the Nuclear localization signal element. Basic residues predominate over residues 84–110 (NQKKKPTQKKKQQQKPKPQAKKKKPGR). The interval 95-123 (QQQKPKPQAKKKKPGRRERMCMKIENDCI) is binding to the viral RNA. The ribosome-binding stretch occupies residues 108–122 (PGRRERMCMKIENDC). A disulfide bridge links Cys122 with Cys137. One can recognise a Peptidase S3 domain in the interval 122–270 (CIFEVKLDGK…RVTPEGTEEW (149 aa)). His148 acts as the Charge relay system in catalysis. Residues 153–163 (IDNPDLAKLTY) carry the Nuclear export signal motif. Residues 164–169 (KKSSKY) are interaction with spike glycoprotein E2. Asp170 serves as the catalytic Charge relay system. Positions 192-202 (PEGHYNWHHGA) are dimerization of the capsid protein. Ser222 (charge relay system) is an active-site residue. Residues 228–232 (DNKGR) are dimerization of the capsid protein. The tract at residues 271–282 (SAALMMCILANT) is functions as an uncleaved signal peptide for the precursor of protein E3/E2. Over 271–694 (SAALMMCILA…PHEIIQYYYG (424 aa)) the chain is Extracellular. Intrachain disulfides connect Cys277–Cys286, Cys291–Cys295, and Cys294–Cys326. Residue Asn281 is glycosylated (N-linked (GlcNAc...) asparagine; by host). Asn328 carries an N-linked (GlcNAc...) asparagine; by host glycan. Intrachain disulfides connect Cys353-Cys459, Cys356-Cys362, Cys425-Cys439, Cys487-Cys599, Cys535-Cys559, and Cys537-Cys554. Interaction with host Mxra8 receptor stretches follow at residues 360–363 (YFCY) and 396–398 (HAH). An interaction with host Mxra8 receptor region spans residues 518–521 (TAGN). Asn534 carries an N-linked (GlcNAc...) asparagine; by host glycan. The interaction with host Mxra8 receptor stretch occupies residues 550–556 (TINTCKI). N-linked (GlcNAc...) asparagine; by host glycosylation occurs at Asn596. Residues 695 to 715 (LYPAATIAAVSGASLMALLTL) form a helical membrane-spanning segment. The Cytoplasmic segment spans residues 716–756 (AATCCMLATARRKCLTPYALTPGAVVPLTLGLLCCAPRANA). Cys719 carries S-palmitoyl cysteine; by host lipidation. An interaction with the capsid protein region spans residues 724–728 (TARRK). Residues Cys729, Cys749, and Cys750 are each lipidated (S-palmitoyl cysteine; by host). The interval 729 to 749 (CLTPYALTPGAVVPLTLGLLC) is transient transmembrane before p62-6K protein processing. A disulfide bond links Cys729 and Cys750. The Extracellular segment spans residues 757–771 (ASFAETMAYLWDENK). The helical transmembrane segment at 772-792 (TLFWMEFAAPAAALALLACCI) threads the bilayer. Residue Lys793 is a topological domain, cytoplasmic. Residues 794-814 (SLICCCKPFSFLVLLSLGASA) form a helical membrane-spanning segment. Over 815-1231 (KAYEHTATIP…AMTWVQRLAS (417 aa)) the chain is Extracellular. Cystine bridges form between Cys865/Cys930, Cys878/Cys910, Cys879/Cys912, and Cys884/Cys894. Positions 900-917 (VYPFMWGGAYCFCDSENT) are E1 fusion peptide loop. Asn957 carries N-linked (GlcNAc...) asparagine; by host glycosylation. Disulfide bonds link Cys1075–Cys1087, Cys1117–Cys1192, Cys1122–Cys1196, and Cys1144–Cys1186. The chain crosses the membrane as a helical span at residues 1232-1252 (GLGGLALIAVVVLVLVTCITM). Cys1249 carries the S-palmitoyl cysteine; by host lipid modification. Cys1249 is lipidated: S-stearoyl cysteine; by host. The Cytoplasmic portion of the chain corresponds to 1253–1254 (RR).

In terms of assembly, homodimer. Homomultimer. Interacts with host karyopherin KPNA4; this interaction allows the nuclear import of the viral capsid protein. Interacts with spike glycoprotein E2. Interacts with host IRAK1; the interaction leads to inhibition of IRAK1-dependent signaling. As to quaternary structure, the precursor of protein E3/E2 and E1 form a heterodimer shortly after synthesis. Interacts with spike glycoprotein E2. The precursor of protein E3/E2 and E1 form a heterodimer shortly after synthesis. Processing of the precursor of protein E3/E2 into E2 and E3 results in a heterodimer of the spike glycoproteins E2 and E1. Spike at virion surface are constituted of a trimer of E2-E1 heterodimers. After target cell attachment and endocytosis, E1 change conformation to form homotrimers. Interacts with 6K protein. E1/E2 heterodimer interacts with host LDLR. In terms of assembly, interacts with spike glycoprotein E1. Processing of the precursor of protein E3/E2 into E2 and E3 results in a heterodimer of the spike glycoproteins E2 and E1. Spike at virion surface are constituted of a trimer of E2-E1 heterodimers. Interacts with 6K protein. Interacts with host MXRA8; this interaction mediates virus entry. As to quaternary structure, oligomer. Interacts with spike glycoprotein E1. Interacts with spike glycoprotein E2. In terms of processing, structural polyprotein: Specific enzymatic cleavages in vivo yield mature proteins. Capsid protein is auto-cleaved during polyprotein translation, unmasking a signal peptide at the N-terminus of the precursor of E3/E2. The remaining polyprotein is then targeted to the host endoplasmic reticulum, where host signal peptidase cleaves it into pE2, 6K and E1 proteins. pE2 is further processed to mature E3 and E2 by host furin in trans-Golgi vesicle. Post-translationally, palmitoylated via thioester bonds. These palmitoylations may induce disruption of the C-terminus transmembrane. This would result in the reorientation of E2 C-terminus from lumenal to cytoplasmic side. N-glycosylated. In terms of processing, palmitoylated via thioester bonds.

The protein localises to the virion. The protein resides in the host cytoplasm. It localises to the host cell membrane. It is found in the host nucleus. Its subcellular location is the virion membrane. The protein localises to the host Golgi apparatus. The protein resides in the host trans-Golgi network. It localises to the host endoplasmic reticulum. The enzyme catalyses Autocatalytic release of the core protein from the N-terminus of the togavirus structural polyprotein by hydrolysis of a -Trp-|-Ser- bond.. Forms an icosahedral capsid with a T=4 symmetry composed of 240 copies of the capsid protein surrounded by a lipid membrane through which penetrate 80 spikes composed of trimers of E1-E2 heterodimers. The capsid protein binds to the viral RNA genome at a site adjacent to a ribosome binding site for viral genome translation following genome release. Possesses a protease activity that results in its autocatalytic cleavage from the nascent structural protein. Following its self-cleavage, the capsid protein transiently associates with ribosomes, and within several minutes the protein binds to viral RNA and rapidly assembles into icosahedric core particles. The resulting nucleocapsid eventually associates with the cytoplasmic domain of the spike glycoprotein E2 at the cell membrane, leading to budding and formation of mature virions. In case of infection, new virions attach to target cells and after clathrin-mediated endocytosis their membrane fuses with the host endosomal membrane. This leads to the release of the nucleocapsid into the cytoplasm, followed by an uncoating event necessary for the genomic RNA to become accessible. The uncoating might be triggered by the interaction of capsid proteins with ribosomes. Binding of ribosomes would release the genomic RNA since the same region is genomic RNA-binding and ribosome-binding. Specifically inhibits interleukin-1 receptor-associated kinase 1/IRAK1-dependent signaling during viral entry, representing a means by which the alphaviruses may evade innate immune detection and activation prior to viral gene expression. Functionally, provides the signal sequence for the translocation of the precursor of protein E3/E2 to the host endoplasmic reticulum. Furin-cleaved E3 remains associated with spike glycoprotein E1 and mediates pH protection of the latter during the transport via the secretory pathway. After virion release from the host cell, the assembly protein E3 is gradually released in the extracellular space. In terms of biological role, plays a role in viral attachment to target host cell, by binding to the cell receptor MXRA8. The host LDLR may also act as a cell receptor for viral entry. Synthesized as a p62 precursor which is processed by furin at the cell membrane just before virion budding, giving rise to E2-E1 heterodimer. The p62-E1 heterodimer is stable, whereas E2-E1 is unstable and dissociate at low pH. p62 is processed at the last step, presumably to avoid E1 fusion activation before its final export to cell surface. E2 C-terminus contains a transitory transmembrane that would be disrupted by palmitoylation, resulting in reorientation of the C-terminal tail from lumenal to cytoplasmic side. This step is critical since E2 C-terminus is involved in budding by interacting with capsid proteins. This release of E2 C-terminus in cytoplasm occurs lately in protein export, and precludes premature assembly of particles at the endoplasmic reticulum membrane. Its function is as follows. Acts as a viroporin that participates in virus glycoprotein processing and transport to the plasma membrane, cell permeabilization and budding of viral particles. The cation channel is permeable to Na(+)&gt;K(+)&gt;Ca(2+) in vitro. Disrupts the calcium homeostasis of the cell, probably at the endoplasmic reticulum level. This leads to cytoplasmic calcium elevation. Because of its lipophilic properties, the 6K protein is postulated to influence the selection of lipids that interact with the transmembrane domains of the glycoproteins, which, in turn, affects the deformability of the bilayer required for the extreme curvature that occurs as budding proceeds. Present in low amount in virions, about 3% compared to viral glycoproteins. Class II viral fusion protein. Fusion activity is inactive as long as E1 is bound to E2 in mature virion. After virus attachment to target cell via host MXRA8 and endocytosis, acidification of the endosome induce dissociation of E1/E2 heterodimer and concomitant trimerization of the E1 subunits. This E1 trimer is fusion active, and promotes release of viral nucleocapsid in cytoplasm after endosome and viral membrane fusion. Efficient fusion requires the presence of cholesterol and sphingolipid in the target membrane. In Aedes (Common banded mosquito), this protein is Structural polyprotein.